The sequence spans 101 residues: UPF0473 protein str1961 (101 aa).

It belongs to the UPF0473 family.

The sequence is that of UPF0473 protein str1961 from Streptococcus thermophilus (strain CNRZ 1066).